The primary structure comprises 65 residues: Ringhalexin (65 aa).

Disulfide bonds link C3–C24, C17–C42, C46–C57, and C58–C63.

As to expression, expressed by the venom gland.

It localises to the secreted. Functionally, has anticoagulant activity, since it is able to inhibit the activation of coagulation factor X (F10) by coagulation factor VIIa (F7) (IC(50)=123.8 nM). Also shows weak irreversible neurotoxicity. The chain is Ringhalexin from Hemachatus haemachatus (Rinkhals).